Reading from the N-terminus, the 332-residue chain is Ribosomal RNA small subunit methyltransferase H (332 aa).

Residues Gly39–Tyr41, Asp56, Phe83, Asp100, and Gln107 each bind S-adenosyl-L-methionine.

Belongs to the methyltransferase superfamily. RsmH family.

Its subcellular location is the cytoplasm. The catalysed reaction is cytidine(1402) in 16S rRNA + S-adenosyl-L-methionine = N(4)-methylcytidine(1402) in 16S rRNA + S-adenosyl-L-homocysteine + H(+). Functionally, specifically methylates the N4 position of cytidine in position 1402 (C1402) of 16S rRNA. The sequence is that of Ribosomal RNA small subunit methyltransferase H from Bartonella tribocorum (strain CIP 105476 / IBS 506).